A 554-amino-acid chain; its full sequence is MSPVLAGVLQLLALTAALALAHVPLGNYLARVYSSPKHLRIEKWIYKSIGADPDTEMRWPAYLRGVLAFSLAGVLFLYLLQRLQGVLPGSLGFASIDPDQAFNTAASFVANTNWQSYYGEQAMGHVVQTAGLAVQNFVSAAVGIAVAVALVRGFARSRTGELGNFWADLVRGVVRVLVPIAAVGAVILVACGVIQNFSGIHEVGQFMGGTQEWNGGAVASQEVIKELGTNGGGYFNANSAHPFENPTPFTNLFEIFLILLIPVALTRTFGIMTGSVRQGYAILGTMAAIWAGFVALMMWTEFAHHGPALQAAGGAMEGKELRFGIGGSSLFAVTTTLTSTGAVDSFHSSYTGLGGGITMLGMMLGEIAPGGVGSGLYGMLVMAVVAVFIAGLMVGRTPEYLGKKIGTREIKFAACYILITPALVLVFTAAAMALPTPGDSMTNSGAHGFSEILYAYTSASNNNGSAFAGLNADTQWFNSTLGLAMLLGRFVPMVFVLALAGSLARQQPVPATAGTLRTEKPLFAGLLAGAVLIITGLTYFPALALGPLAEGLAA.

Transmembrane regions (helical) follow at residues 3–23, 60–80, 131–151, 174–194, 252–272, 279–299, 323–343, 352–372, 375–395, 412–432, 481–501, and 522–542; these read PVLAGVLQLLALTAALALAHV, PAYLRGVLAFSLAGVLFLYLL, GLAVQNFVSAAVGIAVAVALV, VRVLVPIAAVGAVILVACGVI, LFEIFLILLIPVALTRTFGIM, GYAILGTMAAIWAGFVALMMW, FGIGGSSLFAVTTTLTSTGAV, GLGGGITMLGMMLGEIAPGGV, GLYGMLVMAVVAVFIAGLMVG, FAACYILITPALVLVFTAAAM, LGLAMLLGRFVPMVFVLALAG, and LFAGLLAGAVLIITGLTYFPA.

Belongs to the KdpA family. The system is composed of three essential subunits: KdpA, KdpB and KdpC.

It localises to the cell membrane. In terms of biological role, part of the high-affinity ATP-driven potassium transport (or Kdp) system, which catalyzes the hydrolysis of ATP coupled with the electrogenic transport of potassium into the cytoplasm. This subunit binds the extracellular potassium ions and delivers the ions to the membrane domain of KdpB through an intramembrane tunnel. The protein is Potassium-transporting ATPase potassium-binding subunit of Streptomyces coelicolor (strain ATCC BAA-471 / A3(2) / M145).